The following is a 313-amino-acid chain: Tyrosine recombinase XerD (313 aa).

In terms of domain architecture, Core-binding (CB) spans 17–102 (EDNDVIIEQF…TLRRFFQYLY (86 aa)). Positions 123–307 (RLPKDLSEQQ…ATERLKVLHQ (185 aa)) constitute a Tyr recombinase domain. Catalysis depends on residues R163, K187, H259, R262, and H285. Residue Y294 is the O-(3'-phospho-DNA)-tyrosine intermediate of the active site.

It belongs to the 'phage' integrase family. XerD subfamily. In terms of assembly, forms a cyclic heterotetrameric complex composed of two molecules of XerC and two molecules of XerD, in which XerC interacts with XerD via its C-terminal region, XerD interacts with XerC via its C-terminal region and so on.

The protein localises to the cytoplasm. FtsK may regulate the catalytic switch between XerC and XerD in the heterotetrameric complex during the two steps of the recombination process. Functionally, site-specific tyrosine recombinase, which acts by catalyzing the cutting and rejoining of the recombining DNA molecules. Binds cooperatively to specific DNA consensus sequences that are separated from XerC binding sites by a short central region, forming the heterotetrameric XerC-XerD complex that recombines DNA substrates. The complex is essential to convert dimers of the bacterial chromosome into monomers to permit their segregation at cell division. It also contributes to the segregational stability of plasmids. In the complex XerD specifically exchanges the bottom DNA strands. This Proteus mirabilis protein is Tyrosine recombinase XerD.